Consider the following 168-residue polypeptide: Photosystem I assembly protein Ycf3 (168 aa).

TPR repeat units follow at residues Ala35–Pro68, Ser72–Leu105, and Gly120–Asn153.

It belongs to the Ycf3 family.

The protein resides in the plastid. It localises to the chloroplast thylakoid membrane. Essential for the assembly of the photosystem I (PSI) complex. May act as a chaperone-like factor to guide the assembly of the PSI subunits. In Amborella trichopoda, this protein is Photosystem I assembly protein Ycf3.